We begin with the raw amino-acid sequence, 420 residues long: Succinate--CoA ligase [GDP-forming] subunit beta, mitochondrial (420 aa).

Residues 35–263 (KSLMDKYGVN…NASFRQKEIF (229 aa)) form the ATP-grasp domain. GTP-binding positions include glutamine 46, 78–80 (GRG), and valine 135. Mg(2+) contacts are provided by asparagine 232 and aspartate 246. Substrate contacts are provided by residues asparagine 297 and 354–356 (GIM).

It belongs to the succinate/malate CoA ligase beta subunit family. GTP-specific subunit beta subfamily. In terms of assembly, heterodimer of an alpha and a beta subunit. The beta subunit determines specificity for GTP. Requires Mg(2+) as cofactor.

It localises to the mitochondrion. It carries out the reaction GTP + succinate + CoA = succinyl-CoA + GDP + phosphate. Its pathway is carbohydrate metabolism; tricarboxylic acid cycle; succinate from succinyl-CoA (ligase route): step 1/1. Its function is as follows. GTP-specific succinyl-CoA synthetase functions in the citric acid cycle (TCA), coupling the hydrolysis of succinyl-CoA to the synthesis of GTP and thus represents the only step of substrate-level phosphorylation in the TCA. The beta subunit provides nucleotide specificity of the enzyme and binds the substrate succinate, while the binding sites for coenzyme A and phosphate are found in the alpha subunit. This Dictyostelium discoideum (Social amoeba) protein is Succinate--CoA ligase [GDP-forming] subunit beta, mitochondrial (scsB).